Reading from the N-terminus, the 1226-residue chain is DNA-directed RNA polymerase subunit beta (1226 aa).

The protein belongs to the RNA polymerase beta chain family. As to quaternary structure, the RNAP catalytic core consists of 2 alpha, 1 beta, 1 beta' and 1 omega subunit. When a sigma factor is associated with the core the holoenzyme is formed, which can initiate transcription.

It catalyses the reaction RNA(n) + a ribonucleoside 5'-triphosphate = RNA(n+1) + diphosphate. Its function is as follows. DNA-dependent RNA polymerase catalyzes the transcription of DNA into RNA using the four ribonucleoside triphosphates as substrates. The sequence is that of DNA-directed RNA polymerase subunit beta from Leptospira borgpetersenii serovar Hardjo-bovis (strain JB197).